Consider the following 171-residue polypeptide: Transcriptional repressor NrdR (171 aa).

The disordered stretch occupies residues methionine 1–asparagine 21. A zinc finger spans residues cysteine 3 to cysteine 34. Residues glutamine 7 to serine 18 are compositionally biased toward basic and acidic residues. The ATP-cone domain occupies isoleucine 49 to aspartate 139.

It belongs to the NrdR family. Requires Zn(2+) as cofactor.

Negatively regulates transcription of bacterial ribonucleotide reductase nrd genes and operons by binding to NrdR-boxes. The sequence is that of Transcriptional repressor NrdR from Microcystis aeruginosa (strain NIES-843 / IAM M-2473).